Here is a 387-residue protein sequence, read N- to C-terminus: Galactokinase (387 aa).

Substrate is bound at residue 33–36 (EHTD). ATP contacts are provided by residues serine 67 and 124-130 (GAGLSSS). Positions 130 and 162 each coordinate Mg(2+). The active-site Proton acceptor is aspartate 174. Tyrosine 224 contacts substrate.

The protein belongs to the GHMP kinase family. GalK subfamily.

The protein localises to the cytoplasm. The enzyme catalyses alpha-D-galactose + ATP = alpha-D-galactose 1-phosphate + ADP + H(+). It participates in carbohydrate metabolism; galactose metabolism. In terms of biological role, catalyzes the transfer of the gamma-phosphate of ATP to D-galactose to form alpha-D-galactose-1-phosphate (Gal-1-P). In Lactiplantibacillus plantarum (strain ATCC BAA-793 / NCIMB 8826 / WCFS1) (Lactobacillus plantarum), this protein is Galactokinase.